Reading from the N-terminus, the 388-residue chain is MRARRGLLRLPRRSLLAALFFFSLSSSLLYFVYVAPGIVNTYLFMMQAQGILIRDNVRTIGAQVYEQVLRSAYAKRNSSVNDSDYPLDLNHSETFLQTTTFLPEDFTYFANHTCPERLPSMKGPIDINMSEIGMDYIHELFSKDPTIKLGGHWKPSDCMPRWKVAILIPFRNRHEHLPVLFRHLLPMLQRQRLQFAFYVVEQVGTQPFNRAMLFNVGFQEAMKDLDWDCLIFHDVDHIPESDRNYYGCGQMPRHFATKLDKYMYLLPYTEFFGGVSGLTVEQFRKINGFPNAFWGWGGEDDDLWNRVQNAGYSVSRPEGDTGKYKSIPHHHRGEVQFLGRYALLRKSKERQGLDGLNNLNYFANITYDALYKNITVNLTPELAQVNEY.

The Cytoplasmic segment spans residues 1 to 14; it reads MRARRGLLRLPRRS. A helical; Signal-anchor for type II membrane protein membrane pass occupies residues 15 to 35; sequence LLAALFFFSLSSSLLYFVYVA. Over 36–388 the chain is Lumenal; it reads PGIVNTYLFM…TPELAQVNEY (353 aa). Asn-77, Asn-81, Asn-90, Asn-111, and Asn-128 each carry an N-linked (GlcNAc...) asparagine glycan. A disulfide bond links Cys-114 and Cys-158. Residues 169–173, 208–210, 235–236, Tyr-264, and Trp-296 each bind UDP-alpha-D-galactose; these read PFRNR, FNR, and VD. Cys-229 and Cys-248 are oxidised to a cystine. Position 236 (Asp-236) interacts with Mn(2+). 298 to 301 is a binding site for N-acetyl-D-glucosamine; that stretch reads GEDD. His-329 contributes to the Mn(2+) binding site. Position 329 to 330 (329 to 330) interacts with UDP-alpha-D-galactose; sequence HH. Arg-340 is an N-acetyl-D-glucosamine binding site. Residues Asn-364 and Asn-373 are each glycosylated (N-linked (GlcNAc...) asparagine).

It belongs to the glycosyltransferase 7 family. It depends on Mn(2+) as a cofactor. Ubiquitously expressed.

It localises to the golgi apparatus. The protein resides in the golgi stack membrane. The catalysed reaction is a beta-D-glucosyl-(1&lt;-&gt;1')-N-acylsphing-4-enine + UDP-alpha-D-galactose = a beta-D-Gal-(1-&gt;4)-beta-D-Glc-(1&lt;-&gt;1)-Cer(d18:1(4E)) + UDP + H(+). Its pathway is protein modification; protein glycosylation. It functions in the pathway sphingolipid metabolism. Its function is as follows. Catalyzes the synthesis of lactosylceramide (LacCer) via the transfer of galactose from UDP-galactose to glucosylceramide (GlcCer). LacCer is the starting point in the biosynthesis of all gangliosides (membrane-bound glycosphingolipids) which play pivotal roles in the CNS including neuronal maturation and axonal and myelin formation. Plays a role in the glycosylation of BMPR1A and regulation of its protein stability. Essential for extraembryonic development during early embryogenesis. This Homo sapiens (Human) protein is Beta-1,4-galactosyltransferase 5.